Consider the following 322-residue polypeptide: MPTIQDERNLMVFSGNANKPLTQSICKELGVRMGKSLVSRFSDGEEQVEIEESVRRQEVFVVQPTCAPSAENLMELLVIIDALKRASVSSVTAVIPYFGYSRQDRRMRSLRVPITAKVAAKMISAIGADRVLTIDLHADQIQGFFDVPVDNVYASPLLLADIWRAYGTDNIIVVSPDVGGVVRARAMAKRLGDTDLAIIDKRRPRANVATVMNIIGEVNGKTCVLVDDLVDTAGTLCAAAVALKQNGATKVVAYITHPVLSGPAMDNINNSELDELVVTDTIPLSDAARECRKIRQLSVAELLAETIRRIAFGESVSSLYVD.

ATP contacts are provided by residues 43–45 and 102–103; these read DGE and RQ. Mg(2+) is bound by residues H137 and D177. Residue K201 is part of the active site. D-ribose 5-phosphate contacts are provided by residues R203, D227, and 231–235; that span reads DTAGT.

The protein belongs to the ribose-phosphate pyrophosphokinase family. Class I subfamily. As to quaternary structure, homohexamer. Requires Mg(2+) as cofactor.

The protein localises to the cytoplasm. The catalysed reaction is D-ribose 5-phosphate + ATP = 5-phospho-alpha-D-ribose 1-diphosphate + AMP + H(+). It functions in the pathway metabolic intermediate biosynthesis; 5-phospho-alpha-D-ribose 1-diphosphate biosynthesis; 5-phospho-alpha-D-ribose 1-diphosphate from D-ribose 5-phosphate (route I): step 1/1. Its function is as follows. Involved in the biosynthesis of the central metabolite phospho-alpha-D-ribosyl-1-pyrophosphate (PRPP) via the transfer of pyrophosphoryl group from ATP to 1-hydroxyl of ribose-5-phosphate (Rib-5-P). This is Ribose-phosphate pyrophosphokinase from Xylella fastidiosa (strain Temecula1 / ATCC 700964).